The primary structure comprises 1235 residues: Phosphorylase b kinase regulatory subunit alpha, liver isoform (1235 aa).

Phosphoserine is present on residues Ser-697, Ser-731, and Ser-737. Residues 808–838 (LSELYGKAGLNQEWGLIRYISGLLRKKVEVL) form a calmodulin-binding region. Positions 976–986 (SSASSPAISIH) are enriched in low complexity. The interval 976-1002 (SSASSPAISIHEVGHTGVTKTERSGIN) is disordered. Ser-984, Ser-1016, and Ser-1044 each carry phosphoserine. The segment covering 1032–1053 (AYSKSVRSSTPSSPTGTSSSDS) has biased composition (low complexity). The interval 1032-1060 (AYSKSVRSSTPSSPTGTSSSDSGGHHISW) is disordered. Residues 1059–1099 (SWGERQGQWLRRRRLDGAINRVPVGFYQRVWKILQKCHGLS) are calmodulin-binding. A lipid anchor (S-farnesyl cysteine) is attached at Cys-1232.

The protein belongs to the phosphorylase b kinase regulatory chain family. In terms of assembly, hexadecamer of 4 heterotetramers, each composed of alpha, beta, gamma, and delta subunits. Alpha (PHKA1 or PHKA2) and beta (PHKB) are regulatory subunits, gamma (PHKG1 or PHKG2) is the catalytic subunit, and delta is calmodulin. Post-translationally, although the final Cys may be farnesylated, the terminal tripeptide is probably not removed, and the C-terminus is not methylated. In terms of tissue distribution, predominantly expressed in liver and other non-muscle tissues.

It is found in the cell membrane. The protein operates within glycan biosynthesis; glycogen metabolism. Its activity is regulated as follows. By phosphorylation of various serine residues and by calcium. In terms of biological role, phosphorylase b kinase catalyzes the phosphorylation of serine in certain substrates, including troponin I. The alpha chain may bind calmodulin. This Oryctolagus cuniculus (Rabbit) protein is Phosphorylase b kinase regulatory subunit alpha, liver isoform (PHKA2).